We begin with the raw amino-acid sequence, 584 residues long: BEL1-like homeodomain protein 8 (584 aa).

Positions 266–282 (SRFLEPAQKMLEEFCIS) are SR/KY domain. A disordered region spans residues 292-317 (ESTSMEDDDDDDDNLSGFSSSSEPLE). The segment covering 295–305 (SMEDDDDDDDN) has biased composition (acidic residues). The segment at 316–387 (LEPKNRLKKA…ALRTAIAEHV (72 aa)) is BELL domain. Residues 424-486 (IWRPQRGLPE…NARVRLWKPM (63 aa)) constitute a DNA-binding region (homeobox). Residues 503-529 (TSHNIEPSNRPNTVSSPSHEQTLTGLS) form a disordered region.

The protein belongs to the TALE/BELL homeobox family. May form heterodimeric complex with the TALE/KNOX proteins STM and KNAT1/BP.

The protein localises to the nucleus. Its function is as follows. Required for specifying floral primordia and establishing early internode patterning events during inflorescence development. This Arabidopsis thaliana (Mouse-ear cress) protein is BEL1-like homeodomain protein 8 (BLH8).